We begin with the raw amino-acid sequence, 443 residues long: Multidrug resistance protein MdtA (443 aa).

The first 24 residues, 1-24 (MKAQSKRTSRLLILLGIAVAIIVA), serve as a signal peptide directing secretion. Positions 36 to 46 (DGSTGAQQHAV) are enriched in polar residues. 2 disordered regions span residues 36-57 (DGST…GGRR) and 398-443 (TPRS…AEKS). The span at 409–419 (AAEKPATAEKA) shows a compositional bias: basic and acidic residues. Over residues 427 to 443 (SATGASAGSTTTAAEKS) the composition is skewed to low complexity.

This sequence belongs to the membrane fusion protein (MFP) (TC 8.A.1) family. In terms of assembly, part of a tripartite efflux system composed of MdtA, MdtB and MdtC.

It is found in the cell inner membrane. The protein is Multidrug resistance protein MdtA of Yersinia enterocolitica serotype O:8 / biotype 1B (strain NCTC 13174 / 8081).